A 330-amino-acid polypeptide reads, in one-letter code: MVPPTINTGKNITTERAVLTLNGLQIKLHKVVGESRDDIVAKMKDLAMDDHKFPRLPGPNPVSIERKDFEKLKQNKYVVSEKTDGIRFMMFFTRVFGFKVCTIIDRAMTVYLLPFKNIPRVLFQGSIFDGELCVDIVEKKFAFVLFDAVVVSGVTVSQMDLASRFFAMKRSLKEFKNVPEDPAILRYKEWIPLEHPTIIKDHLKKANAIYHTDGLIIMSVDEPVIYGRNFNLFKLKPGTHHTIDFIIMSEDGTIGIFDPNLRKNVPVGKLDGYYNKGSIVECGFADGTWKYIQGRSDKNQANDRLTYEKTLLNIEENITIDELLDLFKWE.

Catalysis depends on Lys-82, which acts as the N6-GMP-lysine intermediate.

The protein belongs to the eukaryotic GTase family. In terms of assembly, monomer. Mg(2+) is required as a cofactor. Requires Mn(2+) as cofactor.

It catalyses the reaction a 5'-end diphospho-ribonucleoside in mRNA + GTP + H(+) = a 5'-end (5'-triphosphoguanosine)-ribonucleoside in mRNA + diphosphate. Functionally, mRNA capping. Transfers a GMP cap onto the end of mRNA that terminates with a 5'-diphosphate tail. This chain is mRNA-capping enzyme, found in Chlorella (PBCV-1).